The primary structure comprises 399 residues: S-adenosylmethionine synthase (399 aa).

Position 17 (His-17) interacts with ATP. Position 19 (Asp-19) interacts with Mg(2+). Residue Glu-45 participates in K(+) binding. L-methionine is bound by residues Glu-58 and Gln-101. Positions 101 to 111 (QSPDIAQGVDE) are flexible loop. ATP is bound by residues 177 to 179 (DAK), 244 to 245 (RF), Asp-253, 259 to 260 (RK), Ala-276, and Lys-280. L-methionine is bound at residue Asp-253. Lys-284 contacts L-methionine.

Belongs to the AdoMet synthase family. In terms of assembly, homotetramer; dimer of dimers. It depends on Mg(2+) as a cofactor. Requires K(+) as cofactor.

The protein localises to the cytoplasm. It carries out the reaction L-methionine + ATP + H2O = S-adenosyl-L-methionine + phosphate + diphosphate. It participates in amino-acid biosynthesis; S-adenosyl-L-methionine biosynthesis; S-adenosyl-L-methionine from L-methionine: step 1/1. Catalyzes the formation of S-adenosylmethionine (AdoMet) from methionine and ATP. The overall synthetic reaction is composed of two sequential steps, AdoMet formation and the subsequent tripolyphosphate hydrolysis which occurs prior to release of AdoMet from the enzyme. The chain is S-adenosylmethionine synthase from Listeria monocytogenes serotype 4b (strain CLIP80459).